Consider the following 1183-residue polypeptide: MGNAPSQDPERSSPPMLSADDAEYPREYRTLGGGGGGGSGGRRFSNVGLVHTSERRHTVIAAQSLEALSGLQKADADRKRDAFMDHLKSKYPQHALALRGQQDRMREQPNYWSFKTRSSRHTQGAQPGLADQAAKLSYASAESLETMSEAELPLGFSRMNRFRQSLPLSRSASQTKLRSPGVLFLQFGEETRRVHITHEVSSLDTLHALIAHMFPQKLTMGMLKSPNTAILIKDEARNVFYELEDVRDIQDRSIIKIYRKEPLYAAFPGSHLTNGDLRREMVYASRESSPTRRLNNLSPAPHLASGSPPPGLPSGLPSGLQSGSPSRSRLSYAGGRPPSYAGSPVHHAAERLGGAPAAQGVSPSPSAILERRDVKPDEDLASKAGGMVLVKGEGLYADPYGLLHEGRLSLAAAAGDPFAYPGAGGLYKRGSVRSLSTYSAAALQSDLEDSLYKAAGGGGPLYGDGYGFRLPPSSPQKLADVAAPPGGPPPPHSPYSGPPSRGSPVRQSFRKDSGSSSVFAESPGGKTRSAGSASTAGAPPSELFPGPGERSLVGFGPPVPAKDTETRERMEAMEKQIASLTGLVQSALLRGSEPETPSEKIEGSNGAATPSAPCGSGGRSSGATPVSGPPPPSASSTPAGQPTAVSRLQMQLHLRGLQNSASDLRGQLQQLRKLQLQNQESVRALLKRTEAELSMRVSEAARRQEDPLQRQRTLVEEERLRYLNDEELITQQLNDLEKSVEKIQRDVSHNHRLVPGPELEEKALVLKQLGETLTELKAHFPGLQSKMRVVLRVEVEAVKFLKEEPQRLDGLLKRCRGVTDTLAQIRRQVDEGVWPPPNNLLSQSPKKVTAETDFNKSVDFEMPPPSPPLNLHELSGPAEGASLTPKGGNPTKGLDTPGKRSVDKAVSVEAAERDWEEKRAALTQYSAKDINRLLEETQAELLKAIPDLDCASKAHPGPAPTPDHKPPKAPHGQKAAPRTEPSGRRGSDELTVPRYRTEKPSKSPPPPPPRRSFPSSHGLTTTRTGEVVVTSKKDSAFIKKAESEELEVQKPQVKLRRAVSEVARPASTPPIMASAIKDEDDEDRIIAELESGGGSVPPMKVVTPGASRLKAAQGQAGSPDKSKHGKQRAEYMRIQAQQQATKPSKEMSGSNETSSPVSEKPSASRTSIPVLTSFGARNSSISF.

The segment at 1–44 is disordered; sequence MGNAPSQDPERSSPPMLSADDAEYPREYRTLGGGGGGGSGGRRF. Phosphoserine occurs at positions 13 and 18. A compositionally biased stretch (gly residues) spans 31-41; the sequence is LGGGGGGGSGG. Residue Ser-45 is modified to Phosphoserine. Thr-52 bears the Phosphothreonine mark. 7 positions are modified to phosphoserine: Ser-53, Ser-64, Ser-143, Ser-165, Ser-169, Ser-179, and Ser-225. The residue at position 241 (Tyr-241) is a Phosphotyrosine. The tract at residues 284–379 is disordered; that stretch reads ASRESSPTRR…ERRDVKPDED (96 aa). Over residues 286 to 296 the composition is skewed to polar residues; it reads RESSPTRRLNN. The segment covering 297–306 has biased composition (low complexity); it reads LSPAPHLASG. Phosphoserine occurs at positions 298, 307, and 324. Residues 313 to 331 are compositionally biased toward low complexity; it reads PSGLPSGLQSGSPSRSRLS. Arg-329 and Arg-336 each carry omega-N-methylarginine. Phosphoserine occurs at positions 343, 362, and 364. Residues 369–379 are compositionally biased toward basic and acidic residues; it reads LERRDVKPDED. The residue at position 396 (Tyr-396) is a Phosphotyrosine. Residues 466–643 form a disordered region; the sequence is YGFRLPPSSP…ASSTPAGQPT (178 aa). Over residues 485–497 the composition is skewed to pro residues; it reads PGGPPPPHSPYSG. Residues Ser-493, Ser-496, and Ser-500 each carry the phosphoserine modification. Arg-501 carries the post-translational modification Omega-N-methylarginine. A phosphoserine mark is found at Ser-503, Ser-513, Ser-515, Ser-517, and Ser-522. The segment covering 524 to 541 has biased composition (low complexity); that stretch reads GGKTRSAGSASTAGAPPS. Basic and acidic residues predominate over residues 562-574; sequence KDTETRERMEAME. Residues Ser-598 and Ser-621 each carry the phosphoserine modification. Phosphothreonine is present on residues Thr-624 and Thr-637. A compositionally biased stretch (low complexity) spans 634–643; the sequence is ASSTPAGQPT. Positions 647–697 are interaction with SNAP25; sequence RLQMQLHLRGLQNSASDLRGQLQQLRKLQLQNQESVRALLKRTEAELSMRV. Coiled-coil stretches lie at residues 654 to 674 and 726 to 746; these read LRGL…LRKL and EELI…IQRD. Residues Ser-844, Ser-857, and Ser-866 each carry the phosphoserine modification. Disordered regions lie at residues 861 to 907 and 949 to 1032; these read EMPP…KAVS and DCAS…VTSK. Thr-884 is subject to Phosphothreonine. A Phosphoserine modification is found at Ser-987. A compositionally biased stretch (pro residues) spans 1002 to 1011; it reads KSPPPPPPRR. A phosphoserine mark is found at Ser-1043 and Ser-1060. Disordered regions lie at residues 1058-1081 and 1105-1183; these read AVSE…DEDD and GASR…SISF. Residues 1135 to 1183 are compositionally biased toward polar residues; that stretch reads QAQQQATKPSKEMSGSNETSSPVSEKPSASRTSIPVLTSFGARNSSISF.

This sequence belongs to the SRCIN1 family. In terms of assembly, interacts with the N-terminal coiled-coil region of SNAP25. Interacts with BCAR1/p130Cas and SRC through its C-terminal domain. Interacts with CSK, CTTN, SORBS3/vinexin, SYP and MAPRE3/EB3. Tyrosine-phosphorylated in response to EGF and to cell adhesion to integrin ligands. As to expression, expressed in some primary breast carcinomas where its presence is significantly associated with increased tumor size. Not detected in normal breast tissue.

Its subcellular location is the cytoplasm. It is found in the cytoskeleton. It localises to the cell projection. The protein resides in the axon. The protein localises to the dendrite. Its subcellular location is the presynapse. It is found in the postsynapse. It localises to the postsynaptic density. In terms of biological role, acts as a negative regulator of SRC by activating CSK which inhibits SRC activity and downstream signaling, leading to impaired cell spreading and migration. Regulates dendritic spine morphology. Involved in calcium-dependent exocytosis. May play a role in neurotransmitter release or synapse maintenance. This chain is SRC kinase signaling inhibitor 1, found in Homo sapiens (Human).